The chain runs to 233 residues: Large ribosomal subunit protein uL1 (233 aa).

The protein belongs to the universal ribosomal protein uL1 family. Part of the 50S ribosomal subunit.

In terms of biological role, binds directly to 23S rRNA. Forms the L1 stalk. Unlike the case in the Thermus thermophilus 70S ribosome, this protein is not seen to block the exit path of the E site tRNA. It is clear that the protein in the structure is flexible however, so this is probably due to its position in these crystals. Functionally, protein L1 is also a translational repressor protein, it controls the translation of the L11 operon by binding to its mRNA. This chain is Large ribosomal subunit protein uL1 (rplA), found in Deinococcus radiodurans (strain ATCC 13939 / DSM 20539 / JCM 16871 / CCUG 27074 / LMG 4051 / NBRC 15346 / NCIMB 9279 / VKM B-1422 / R1).